The primary structure comprises 79 residues: Gas vesicle protein A2 (79 aa).

The alpha helix 1 stretch occupies residues 9 to 19 (LAEVLDRVLDK). The tract at residues 23 to 31 (VDVWARISL) is beta-strand 1. Residues 32–34 (VGI) form a beta turn region. A beta-strand 2 region spans residues 35–43 (EILTVEARV). The alpha helix 2 stretch occupies residues 48-67 (VDTFLHYAEEIAKIEQAELT).

It belongs to the gas vesicle GvpA family. The gas vesicle shell is 2 nm thick and consists of a single layer of this protein. It forms helical ribs nearly perpendicular to the long axis of the vesicle.

The protein localises to the gas vesicle shell. Its function is as follows. Gas vesicles are hollow, gas filled proteinaceous nanostructures found in several microbial planktonic microorganisms. They allow positioning of halobacteria at the optimal depth for growth in the poorly aerated shallow brine pools of their habitat. GvpA forms the gas vesicle shell. This protein can replace the p-gvpA gene in the p-vac locus and increases the critical collapse pressure (CCP) of hybrid gas vesicles from 0.66 MPa to 0.90 MPa. In stationary phase gas vesicles about 30 times more GvpA1 is found than GvpA2. Expression of 2 c-vac DNA fragments containing 2 divergently transcribed regions (gvpE-gvpF-gvpG-gvpH-gvpI-gvpJ-gvpK-gvpL-gvpM and gvpA-gvpC-gvpN-gvpO) allows H.volcanii to produce gas vesicles. All site-directed mutagenesis is tested in H.volcanii. The sequence is that of Gas vesicle protein A2 from Halobacterium salinarum (strain ATCC 700922 / JCM 11081 / NRC-1) (Halobacterium halobium).